The following is a 424-amino-acid chain: Light-independent protochlorophyllide reductase subunit N (424 aa).

[4Fe-4S] cluster contacts are provided by Cys-27, Cys-52, and Cys-113.

It belongs to the BchN/ChlN family. Protochlorophyllide reductase is composed of three subunits; BchL, BchN and BchB. Forms a heterotetramer of two BchB and two BchN subunits. The cofactor is [4Fe-4S] cluster.

The catalysed reaction is chlorophyllide a + oxidized 2[4Fe-4S]-[ferredoxin] + 2 ADP + 2 phosphate = protochlorophyllide a + reduced 2[4Fe-4S]-[ferredoxin] + 2 ATP + 2 H2O. It participates in porphyrin-containing compound metabolism; bacteriochlorophyll biosynthesis (light-independent). Functionally, component of the dark-operative protochlorophyllide reductase (DPOR) that uses Mg-ATP and reduced ferredoxin to reduce ring D of protochlorophyllide (Pchlide) to form chlorophyllide a (Chlide). This reaction is light-independent. The NB-protein (BchN-BchB) is the catalytic component of the complex. This chain is Light-independent protochlorophyllide reductase subunit N, found in Halorhodospira halophila (strain DSM 244 / SL1) (Ectothiorhodospira halophila (strain DSM 244 / SL1)).